Here is a 404-residue protein sequence, read N- to C-terminus: Voltage-gated potassium channel subunit beta-3 (404 aa).

A compositionally biased stretch (polar residues) spans 1 to 14 (MQVSIACTEQNLRS). The segment at 1–77 (MQVSIACTEQ…LRESTGRGTG (77 aa)) is disordered. Positions 28–50 (PGGGNGGPAGGGHGNPPGGGGSG) are enriched in gly residues. NADP(+) is bound by residues Thr97, Trp98, Gln104, and Asp126. The active-site Proton donor/acceptor is the Tyr131. 15 residues coordinate NADP(+): Asn199, Ser229, Arg230, Gln255, Trp284, Pro286, Leu287, Ala288, Cys289, Lys295, Arg305, Gly364, Ser366, Gln370, and Glu373.

Belongs to the shaker potassium channel beta subunit family. In terms of assembly, forms heteromultimeric complex with alpha subunits. Interacts with KCNA5 and KCNB2. Brain specific. Most prominent expression in cerebellum. Weaker signals detected in cortex, occipital lobe, frontal lobe and temporal lobe. Not detected in spinal cord, heart, lung, liver, kidney, pancreas, placenta and skeletal muscle.

It is found in the cytoplasm. In terms of biological role, regulatory subunit of the voltage-gated potassium (Kv) channels composed of pore-forming and potassium-conducting alpha subunits and of regulatory beta subunit. The beta-3/KCNAB3 subunit may mediate closure of potassium channels. Increases inactivation of Kv1.5/KCNA5 alpha subunit-containing channels. May display nicotinamide adenine dinucleotide phosphate (NADPH)-dependent aldoketoreductase activity. The binding of oxidized and reduced NADP(H) cofactors may be required for the regulation of potassium channel activity. This chain is Voltage-gated potassium channel subunit beta-3, found in Homo sapiens (Human).